The primary structure comprises 249 residues: Coproheme decarboxylase (249 aa).

Residues Arg-131, 145 to 149 (YPMDK), His-172, and Gln-185 contribute to the Fe-coproporphyrin III site. Tyr-145 is a catalytic residue.

The protein belongs to the ChdC family. Type 1 subfamily. It depends on Fe-coproporphyrin III as a cofactor.

It catalyses the reaction Fe-coproporphyrin III + 2 H2O2 + 2 H(+) = heme b + 2 CO2 + 4 H2O. The catalysed reaction is Fe-coproporphyrin III + H2O2 + H(+) = harderoheme III + CO2 + 2 H2O. It carries out the reaction harderoheme III + H2O2 + H(+) = heme b + CO2 + 2 H2O. It participates in porphyrin-containing compound metabolism; protoheme biosynthesis. Its function is as follows. Involved in coproporphyrin-dependent heme b biosynthesis. Catalyzes the decarboxylation of Fe-coproporphyrin III (coproheme) to heme b (protoheme IX), the last step of the pathway. The reaction occurs in a stepwise manner with a three-propionate intermediate. The protein is Coproheme decarboxylase of Staphylococcus epidermidis (strain ATCC 35984 / DSM 28319 / BCRC 17069 / CCUG 31568 / BM 3577 / RP62A).